The primary structure comprises 614 residues: Dihydroxy-acid dehydratase (614 aa).

Residue D81 coordinates Mg(2+). C122 is a binding site for [2Fe-2S] cluster. Mg(2+) contacts are provided by D123 and K124. K124 carries the N6-carboxylysine modification. C193 contributes to the [2Fe-2S] cluster binding site. Mg(2+) is bound at residue E489. S515 acts as the Proton acceptor in catalysis.

The protein belongs to the IlvD/Edd family. As to quaternary structure, homodimer. The cofactor is [2Fe-2S] cluster. Mg(2+) is required as a cofactor.

It carries out the reaction (2R)-2,3-dihydroxy-3-methylbutanoate = 3-methyl-2-oxobutanoate + H2O. The catalysed reaction is (2R,3R)-2,3-dihydroxy-3-methylpentanoate = (S)-3-methyl-2-oxopentanoate + H2O. It functions in the pathway amino-acid biosynthesis; L-isoleucine biosynthesis; L-isoleucine from 2-oxobutanoate: step 3/4. Its pathway is amino-acid biosynthesis; L-valine biosynthesis; L-valine from pyruvate: step 3/4. Its function is as follows. Functions in the biosynthesis of branched-chain amino acids. Catalyzes the dehydration of (2R,3R)-2,3-dihydroxy-3-methylpentanoate (2,3-dihydroxy-3-methylvalerate) into 2-oxo-3-methylpentanoate (2-oxo-3-methylvalerate) and of (2R)-2,3-dihydroxy-3-methylbutanoate (2,3-dihydroxyisovalerate) into 2-oxo-3-methylbutanoate (2-oxoisovalerate), the penultimate precursor to L-isoleucine and L-valine, respectively. In Marinomonas sp. (strain MWYL1), this protein is Dihydroxy-acid dehydratase.